The following is a 337-amino-acid chain: GTPase Obg (337 aa).

In terms of domain architecture, Obg spans 1-159 (MQFIDYVKIY…RWVILELKLL (159 aa)). In terms of domain architecture, OBG-type G spans 160–331 (ADVGLIGLPN…LLHYLSEKVG (172 aa)). GTP-binding positions include 166–173 (GLPNAGKS), 191–195 (FTTLI), 213–216 (DIPG), 283–286 (TKID), and 312–314 (SAV). Mg(2+)-binding residues include Ser-173 and Thr-193.

The protein belongs to the TRAFAC class OBG-HflX-like GTPase superfamily. OBG GTPase family. As to quaternary structure, monomer. The cofactor is Mg(2+).

Its subcellular location is the cytoplasm. An essential GTPase which binds GTP, GDP and possibly (p)ppGpp with moderate affinity, with high nucleotide exchange rates and a fairly low GTP hydrolysis rate. Plays a role in control of the cell cycle, stress response, ribosome biogenesis and in those bacteria that undergo differentiation, in morphogenesis control. In Thermodesulfovibrio yellowstonii (strain ATCC 51303 / DSM 11347 / YP87), this protein is GTPase Obg.